An 848-amino-acid polypeptide reads, in one-letter code: Xylosyltransferase (848 aa).

At 1–14 the chain is on the cytoplasmic side; sequence MSLHRTLRRFLRKW. The helical; Signal-anchor for type II membrane protein transmembrane segment at 15 to 35 threads the bilayer; that stretch reads KALVYAVSFILLIQAFFTFQS. The Lumenal segment spans residues 36–843; the sequence is SPNLMEEEHL…PKTELISVKP (808 aa). 4 disulfides stabilise this stretch: Cys145–Cys173, Cys189–Cys427, Cys446–Cys459, and Cys448–Cys457. UDP-alpha-D-xylose-binding positions include Val219, Asp247, and 276 to 278; that span reads TIW. Asn306 is a glycosylation site (N-linked (GlcNAc...) asparagine). 379-380 serves as a coordination point for UDP-alpha-D-xylose; sequence DW. UDP-alpha-D-xylose contacts are provided by residues Ser460 and 482–483; that span reads RK. Intrachain disulfides connect Cys529/Cys811 and Cys794/Cys822. A glycan (N-linked (GlcNAc...) asparagine) is linked at Asn530. The disordered stretch occupies residues 824–848; the sequence is NTNWSSLSPDPKTELISVKPDGRIR. An N-linked (GlcNAc...) asparagine glycan is attached at Asn826.

This sequence belongs to the glycosyltransferase 14 family. XylT subfamily. It depends on a divalent metal cation as a cofactor.

The protein resides in the endoplasmic reticulum membrane. The protein localises to the golgi apparatus membrane. The catalysed reaction is UDP-alpha-D-xylose + L-seryl-[protein] = 3-O-(beta-D-xylosyl)-L-seryl-[protein] + UDP + H(+). The protein operates within glycan metabolism; chondroitin sulfate biosynthesis. It functions in the pathway glycan metabolism; heparan sulfate biosynthesis. Its function is as follows. Catalyzes the first step in biosynthesis of glycosaminoglycan. Transfers D-xylose from UDP-D-xylose to specific serine residues of the core protein. Initial enzyme in the biosynthesis of chondroitin sulfate and dermatan sulfate proteoglycans in fibroblasts and chondrocytes. The polypeptide is Xylosyltransferase (xt) (Ciona intestinalis (Transparent sea squirt)).